The chain runs to 470 residues: Argininosuccinate lyase (470 aa).

Belongs to the lyase 1 family. Argininosuccinate lyase subfamily.

Its subcellular location is the cytoplasm. It catalyses the reaction 2-(N(omega)-L-arginino)succinate = fumarate + L-arginine. It functions in the pathway amino-acid biosynthesis; L-arginine biosynthesis; L-arginine from L-ornithine and carbamoyl phosphate: step 3/3. The polypeptide is Argininosuccinate lyase (Leptospira borgpetersenii serovar Hardjo-bovis (strain L550)).